The following is a 213-amino-acid chain: Heavy metal-binding protein HIP (213 aa).

The C1q domain maps to phenylalanine 80 to histidine 213.

In terms of tissue distribution, pallium, gill and liver.

Its subcellular location is the secreted. Binds heavy metals. May function as a carrier of divalent cations in plasma. This chain is Heavy metal-binding protein HIP, found in Mytilus edulis (Blue mussel).